Here is a 361-residue protein sequence, read N- to C-terminus: Molybdenum import ATP-binding protein ModC (361 aa).

The region spanning 1-235 (MDGLRLRFRR…VDLPLALDDD (235 aa)) is the ABC transporter domain. 33–40 (GHSGSGKS) contributes to the ATP binding site. One can recognise a Mop domain in the interval 296–361 (QSSILNRLPV…AQIKSVAVLA (66 aa)).

Belongs to the ABC transporter superfamily. Molybdate importer (TC 3.A.1.8) family. In terms of assembly, the complex is composed of two ATP-binding proteins (ModC), two transmembrane proteins (ModB) and a solute-binding protein (ModA).

The protein resides in the cell inner membrane. The enzyme catalyses molybdate(out) + ATP + H2O = molybdate(in) + ADP + phosphate + H(+). Functionally, part of the ABC transporter complex ModABC involved in molybdenum import. Responsible for energy coupling to the transport system. The polypeptide is Molybdenum import ATP-binding protein ModC (Pseudomonas aeruginosa (strain ATCC 15692 / DSM 22644 / CIP 104116 / JCM 14847 / LMG 12228 / 1C / PRS 101 / PAO1)).